The sequence spans 161 residues: MAIITIDRVISHLLSKQTIAGLDLGTKTIGIAISDISLTFSNPRPVIQRKKFTLDALKLIKIFDHENVGVAIIGLPINMDGSNGPRVQATRTFVSNIAMYTKIPFIFWDERLSTIAAQRHLLEIDVSRIKRENRIDSAAAAFILQGALDRIQILRQNHTEG.

Belongs to the YqgF nuclease family.

The protein localises to the cytoplasm. Functionally, could be a nuclease involved in processing of the 5'-end of pre-16S rRNA. This Bartonella bacilliformis (strain ATCC 35685 / KC583 / Herrer 020/F12,63) protein is Putative pre-16S rRNA nuclease.